A 286-amino-acid polypeptide reads, in one-letter code: NAD kinase (286 aa).

Catalysis depends on Asp-74, which acts as the Proton acceptor. Residues Asp-74–Gly-75, Asn-148–Asp-149, Asp-178, Ala-186, Thr-189–Ser-194, and Gln-244 contribute to the NAD(+) site.

This sequence belongs to the NAD kinase family. Requires a divalent metal cation as cofactor.

It is found in the cytoplasm. It catalyses the reaction NAD(+) + ATP = ADP + NADP(+) + H(+). In terms of biological role, involved in the regulation of the intracellular balance of NAD and NADP, and is a key enzyme in the biosynthesis of NADP. Catalyzes specifically the phosphorylation on 2'-hydroxyl of the adenosine moiety of NAD to yield NADP. The sequence is that of NAD kinase from Campylobacter jejuni subsp. doylei (strain ATCC BAA-1458 / RM4099 / 269.97).